The chain runs to 161 residues: Regulator of ribonuclease activity A (161 aa).

It belongs to the RraA family. As to quaternary structure, homotrimer. Binds to both RNA-binding sites in the C-terminal region of Rne and to RhlB.

It localises to the cytoplasm. Functionally, globally modulates RNA abundance by binding to RNase E (Rne) and regulating its endonucleolytic activity. Can modulate Rne action in a substrate-dependent manner by altering the composition of the degradosome. Modulates RNA-binding and helicase activities of the degradosome. This chain is Regulator of ribonuclease activity A, found in Shigella flexneri serotype 5b (strain 8401).